Reading from the N-terminus, the 323-residue chain is MANFLFEFEKPLVELENKISDLKKFAEEKNIDVSRELELLSAKAQQLAKEIYQNLTPWQRVLLARHPERPNTRDYINYLCDDFIELKGDRRFGDDPAMIGGIGIIENIPVTIVGNLKGKDTKENIMRNFGMAHPEGYRKAIRLFKQAEKFGRPVLTFIDTPGAFCGIGAEERGQFQAIAEAIATLISLKTPVLAVITGEGGSGGALALAAGDKLLMLENAVFSVIAPESFAAILWKDSSRAQEASELLKLTSEHLLEFGLIDGIIPEPLGGAHRNPAETLKAVKEEVVKNLQILKETPVEELLRRRYQRYRYIGSGIVEGGVS.

The CoA carboxyltransferase C-terminal domain occupies 36–293; sequence ELELLSAKAQ…KEEVVKNLQI (258 aa).

It belongs to the AccA family. As to quaternary structure, acetyl-CoA carboxylase is a heterohexamer composed of biotin carboxyl carrier protein (AccB), biotin carboxylase (AccC) and two subunits each of ACCase subunit alpha (AccA) and ACCase subunit beta (AccD).

The protein resides in the cytoplasm. The catalysed reaction is N(6)-carboxybiotinyl-L-lysyl-[protein] + acetyl-CoA = N(6)-biotinyl-L-lysyl-[protein] + malonyl-CoA. Its pathway is lipid metabolism; malonyl-CoA biosynthesis; malonyl-CoA from acetyl-CoA: step 1/1. In terms of biological role, component of the acetyl coenzyme A carboxylase (ACC) complex. First, biotin carboxylase catalyzes the carboxylation of biotin on its carrier protein (BCCP) and then the CO(2) group is transferred by the carboxyltransferase to acetyl-CoA to form malonyl-CoA. The polypeptide is Acetyl-coenzyme A carboxylase carboxyl transferase subunit alpha (Carboxydothermus hydrogenoformans (strain ATCC BAA-161 / DSM 6008 / Z-2901)).